The primary structure comprises 185 residues: Threonylcarbamoyl-AMP synthase (185 aa).

Residues 4–185 (SFRAQCAARV…LVTGQVIRPA (182 aa)) enclose the YrdC-like domain.

This sequence belongs to the SUA5 family. TsaC subfamily.

It is found in the cytoplasm. The catalysed reaction is L-threonine + hydrogencarbonate + ATP = L-threonylcarbamoyladenylate + diphosphate + H2O. Functionally, required for the formation of a threonylcarbamoyl group on adenosine at position 37 (t(6)A37) in tRNAs that read codons beginning with adenine. Catalyzes the conversion of L-threonine, HCO(3)(-)/CO(2) and ATP to give threonylcarbamoyl-AMP (TC-AMP) as the acyladenylate intermediate, with the release of diphosphate. In Pseudomonas aeruginosa (strain UCBPP-PA14), this protein is Threonylcarbamoyl-AMP synthase.